The chain runs to 340 residues: NADH-quinone oxidoreductase subunit H (340 aa).

Transmembrane regions (helical) follow at residues 4-24, 78-98, 113-133, 151-171, 184-204, 244-264, 273-293, and 316-336; these read TIGI…PLLI, YLFV…WAVI, VLYL…AGWA, VSYE…AGSM, MLHW…IAGI, SMIL…LSPF, IFFV…FLFV, and VLIP…VAHV.

This sequence belongs to the complex I subunit 1 family. In terms of assembly, NDH-1 is composed of 14 different subunits. Subunits NuoA, H, J, K, L, M, N constitute the membrane sector of the complex.

The protein localises to the cell inner membrane. It carries out the reaction a quinone + NADH + 5 H(+)(in) = a quinol + NAD(+) + 4 H(+)(out). Its function is as follows. NDH-1 shuttles electrons from NADH, via FMN and iron-sulfur (Fe-S) centers, to quinones in the respiratory chain. The immediate electron acceptor for the enzyme in this species is believed to be ubiquinone. Couples the redox reaction to proton translocation (for every two electrons transferred, four hydrogen ions are translocated across the cytoplasmic membrane), and thus conserves the redox energy in a proton gradient. This subunit may bind ubiquinone. This Legionella pneumophila (strain Corby) protein is NADH-quinone oxidoreductase subunit H.